Here is a 490-residue protein sequence, read N- to C-terminus: Betaine aldehyde dehydrogenase (490 aa).

Asn-93 serves as a coordination point for K(+). Residue 150–152 (GAW) coordinates NAD(+). Lys-162 functions as the Charge relay system in the catalytic mechanism. 176–179 (KPSE) provides a ligand contact to NAD(+). Val-180 is a K(+) binding site. Residue 230-233 (GTAT) coordinates NAD(+). Leu-246 contributes to the K(+) binding site. Residue Glu-252 is the Proton acceptor of the active site. Residues Gly-254, Cys-286, and Glu-387 each contribute to the NAD(+) site. The Nucleophile role is filled by Cys-286. Cys-286 is modified (cysteine sulfenic acid (-SOH)). The K(+) site is built by Lys-457 and Gly-460. The active-site Charge relay system is Glu-464.

The protein belongs to the aldehyde dehydrogenase family. As to quaternary structure, dimer of dimers. Requires K(+) as cofactor.

The catalysed reaction is betaine aldehyde + NAD(+) + H2O = glycine betaine + NADH + 2 H(+). It participates in amine and polyamine biosynthesis; betaine biosynthesis via choline pathway; betaine from betaine aldehyde: step 1/1. In terms of biological role, involved in the biosynthesis of the osmoprotectant glycine betaine. Catalyzes the irreversible oxidation of betaine aldehyde to the corresponding acid. The protein is Betaine aldehyde dehydrogenase of Xanthomonas campestris pv. campestris (strain ATCC 33913 / DSM 3586 / NCPPB 528 / LMG 568 / P 25).